We begin with the raw amino-acid sequence, 111 residues long: NADH-ubiquinone oxidoreductase chain 3 (111 aa).

Helical transmembrane passes span 1-21 (MLVL…FYIG), 56-76 (FFIM…FLGI), and 84-104 (LISF…EWWY).

This sequence belongs to the complex I subunit 3 family.

The protein localises to the mitochondrion membrane. It carries out the reaction a ubiquinone + NADH + 5 H(+)(in) = a ubiquinol + NAD(+) + 4 H(+)(out). Functionally, core subunit of the mitochondrial membrane respiratory chain NADH dehydrogenase (Complex I) that is believed to belong to the minimal assembly required for catalysis. Complex I functions in the transfer of electrons from NADH to the respiratory chain. The immediate electron acceptor for the enzyme is believed to be ubiquinone. The protein is NADH-ubiquinone oxidoreductase chain 3 (ND3) of Ascaris suum (Pig roundworm).